Consider the following 272-residue polypeptide: Pantothenate synthetase (272 aa).

27 to 34 (MGALHNGH) is a binding site for ATP. His-34 functions as the Proton donor in the catalytic mechanism. Residue Gln-58 coordinates (R)-pantoate. Gln-58 provides a ligand contact to beta-alanine. 143 to 146 (GKKD) contacts ATP. A (R)-pantoate-binding site is contributed by Gln-149. ATP-binding positions include Val-172 and 180–183 (LSSR).

It belongs to the pantothenate synthetase family. As to quaternary structure, homodimer.

Its subcellular location is the cytoplasm. It catalyses the reaction (R)-pantoate + beta-alanine + ATP = (R)-pantothenate + AMP + diphosphate + H(+). It participates in cofactor biosynthesis; (R)-pantothenate biosynthesis; (R)-pantothenate from (R)-pantoate and beta-alanine: step 1/1. Functionally, catalyzes the condensation of pantoate with beta-alanine in an ATP-dependent reaction via a pantoyl-adenylate intermediate. This is Pantothenate synthetase from Aliarcobacter butzleri (strain RM4018) (Arcobacter butzleri).